The chain runs to 107 residues: Growth-regulated alpha protein (107 aa).

Positions 1-34 (MARAALSAAPSNPRLLRVALLLLLLVAAGRRAAG) are cleaved as a signal peptide. Cystine bridges form between C43–C69 and C45–C85.

It belongs to the intercrine alpha (chemokine CxC) family. Post-translationally, N-terminal processed forms GRO-alpha(4-73), GRO-alpha(5-73) and GRO-alpha(6-73) are produced by proteolytic cleavage after secretion from peripheral blood monocytes.

Its subcellular location is the secreted. In terms of biological role, has chemotactic activity for neutrophils. May play a role in inflammation and exerts its effects on endothelial cells in an autocrine fashion. In vitro, the processed forms GRO-alpha(4-73), GRO-alpha(5-73) and GRO-alpha(6-73) show a 30-fold higher chemotactic activity. The sequence is that of Growth-regulated alpha protein (CXCL1) from Homo sapiens (Human).